Here is a 494-residue protein sequence, read N- to C-terminus: Protein nucleotidyltransferase YdiU (494 aa).

ATP contacts are provided by Gly-99, Gly-101, Arg-102, Lys-118, Asp-130, Gly-131, Arg-181, and Arg-188. Residue Asp-261 is the Proton acceptor of the active site. 2 residues coordinate Mg(2+): Asn-262 and Asp-271. Residue Asp-271 participates in ATP binding.

Belongs to the SELO family. It depends on Mg(2+) as a cofactor. The cofactor is Mn(2+).

The catalysed reaction is L-seryl-[protein] + ATP = 3-O-(5'-adenylyl)-L-seryl-[protein] + diphosphate. It catalyses the reaction L-threonyl-[protein] + ATP = 3-O-(5'-adenylyl)-L-threonyl-[protein] + diphosphate. It carries out the reaction L-tyrosyl-[protein] + ATP = O-(5'-adenylyl)-L-tyrosyl-[protein] + diphosphate. The enzyme catalyses L-histidyl-[protein] + UTP = N(tele)-(5'-uridylyl)-L-histidyl-[protein] + diphosphate. The catalysed reaction is L-seryl-[protein] + UTP = O-(5'-uridylyl)-L-seryl-[protein] + diphosphate. It catalyses the reaction L-tyrosyl-[protein] + UTP = O-(5'-uridylyl)-L-tyrosyl-[protein] + diphosphate. In terms of biological role, nucleotidyltransferase involved in the post-translational modification of proteins. It can catalyze the addition of adenosine monophosphate (AMP) or uridine monophosphate (UMP) to a protein, resulting in modifications known as AMPylation and UMPylation. The polypeptide is Protein nucleotidyltransferase YdiU (Variovorax paradoxus (strain S110)).